The chain runs to 150 residues: Large ribosomal subunit protein bL9 (150 aa).

It belongs to the bacterial ribosomal protein bL9 family.

In terms of biological role, binds to the 23S rRNA. This is Large ribosomal subunit protein bL9 from Burkholderia ambifaria (strain MC40-6).